The primary structure comprises 62 residues: Large ribosomal subunit protein bL28 (62 aa).

It belongs to the bacterial ribosomal protein bL28 family.

This chain is Large ribosomal subunit protein bL28, found in Thermobifida fusca (strain YX).